The primary structure comprises 88 residues: Large ribosomal subunit protein eL31 (88 aa).

This sequence belongs to the eukaryotic ribosomal protein eL31 family.

The sequence is that of Large ribosomal subunit protein eL31 from Saccharolobus islandicus (strain Y.N.15.51 / Yellowstone #2) (Sulfolobus islandicus).